Reading from the N-terminus, the 299-residue chain is Caspase-1 (299 aa).

The propeptide occupies 1 to 28; it reads MLDGKQDNGNVDSVDIKQRTNGGGDEGD. Residues 1-45 form a disordered region; that stretch reads MLDGKQDNGNVDSVDIKQRTNGGGDEGDALGSNSSSQPNRVARMP. Active-site residues include His136 and Cys178. Residues 185–195 constitute a propeptide that is removed on maturation; it reads GGITLSRTETD.

It belongs to the peptidase C14A family. In terms of assembly, heterotetramer that consists of two anti-parallel arranged heterodimers, each one formed by a 19/18 kDa (p19/18) and a 12 kDa (p12) subunit. Post-translationally, the two subunits are derived from the precursor sequence by an autocatalytic mechanism.

In terms of biological role, involved in the activation cascade of caspases responsible for apoptosis execution. Inhibited by the baculovirus anti-apoptotic protein p35. Cleaves p35 and nuclear immunophilin FKBP46. This is Caspase-1 from Spodoptera frugiperda (Fall armyworm).